A 526-amino-acid chain; its full sequence is GMP synthase [glutamine-hydrolyzing] (526 aa).

The Glutamine amidotransferase type-1 domain occupies 4–204; that stretch reads KIVVLDFGSQ…AHAICGCSGD (201 aa). C87 serves as the catalytic Nucleophile. Residues H178 and E180 contribute to the active site. The region spanning 205–401 is the GMPS ATP-PPase domain; it reads WTPASFVEEQ…LDVPDPIVGR (197 aa). 232-238 lines the ATP pocket; sequence SGGVDSS.

Homodimer.

It catalyses the reaction XMP + L-glutamine + ATP + H2O = GMP + L-glutamate + AMP + diphosphate + 2 H(+). It functions in the pathway purine metabolism; GMP biosynthesis; GMP from XMP (L-Gln route): step 1/1. In terms of biological role, catalyzes the synthesis of GMP from XMP. The protein is GMP synthase [glutamine-hydrolyzing] of Salinibacter ruber (strain DSM 13855 / M31).